Consider the following 490-residue polypeptide: Acetyl-coenzyme A carboxylase carboxyl transferase subunit beta, chloroplastic (490 aa).

The segment at 184 to 203 (LNSSENEGSSRRTRTKGSDL) is disordered. The CoA carboxyltransferase N-terminal domain occupies 221–490 (LWVQCENCYG…PLNQKSSKIK (270 aa)). Zn(2+)-binding residues include cysteine 225, cysteine 228, cysteine 244, and cysteine 247. The C4-type zinc finger occupies 225 to 247 (CENCYGLNYKKFLKSKMNICEQC).

Belongs to the AccD/PCCB family. Acetyl-CoA carboxylase is a heterohexamer composed of biotin carboxyl carrier protein, biotin carboxylase and 2 subunits each of ACCase subunit alpha and ACCase plastid-coded subunit beta (accD). Requires Zn(2+) as cofactor.

The protein localises to the plastid. It is found in the chloroplast stroma. The enzyme catalyses N(6)-carboxybiotinyl-L-lysyl-[protein] + acetyl-CoA = N(6)-biotinyl-L-lysyl-[protein] + malonyl-CoA. The protein operates within lipid metabolism; malonyl-CoA biosynthesis; malonyl-CoA from acetyl-CoA: step 1/1. Its function is as follows. Component of the acetyl coenzyme A carboxylase (ACC) complex. Biotin carboxylase (BC) catalyzes the carboxylation of biotin on its carrier protein (BCCP) and then the CO(2) group is transferred by the transcarboxylase to acetyl-CoA to form malonyl-CoA. The polypeptide is Acetyl-coenzyme A carboxylase carboxyl transferase subunit beta, chloroplastic (Solanum bulbocastanum (Wild potato)).